Reading from the N-terminus, the 66-residue chain is MAFLKKSLFLVLFLGLVSLSICDEEKRQDEDDDDDDDEEKRGVFDIIKDAGKQLVAHAMGKIAEKV.

The N-terminal stretch at 1-22 (MAFLKKSLFLVLFLGLVSLSIC) is a signal peptide. The propeptide occupies 23–39 (DEEKRQDEDDDDDDDEE). Val66 bears the Valine amide mark.

In terms of tissue distribution, expressed by the skin glands.

The protein resides in the secreted. In terms of biological role, has antibacterial activity against Gram-negative bacterium E.coli ATCC 25922 (MIC=300 uM) but not against S.pneumoniae ATCC 700603, S.choleraesuis ATCC 14028 or Gram-positive bacterium S.aureus ATCC 29313. Shows virtually no hemolytic activity and no cytotoxicity. This Leptodactylus pustulatus (Ceara white-lipped frog) protein is Ocellatin-PT1.